Reading from the N-terminus, the 139-residue chain is Aspartate 1-decarboxylase (139 aa).

Residue S25 is the Schiff-base intermediate with substrate; via pyruvic acid of the active site. S25 bears the Pyruvic acid (Ser) mark. A substrate-binding site is contributed by T57. The active-site Proton donor is Y58. 73 to 75 (GAA) serves as a coordination point for substrate. The segment at 116–139 (ELGEDPAHAPAGSGLKDPRHPEGE) is disordered.

The protein belongs to the PanD family. Heterooctamer of four alpha and four beta subunits. Pyruvate serves as cofactor. In terms of processing, is synthesized initially as an inactive proenzyme, which is activated by self-cleavage at a specific serine bond to produce a beta-subunit with a hydroxyl group at its C-terminus and an alpha-subunit with a pyruvoyl group at its N-terminus.

The protein localises to the cytoplasm. The catalysed reaction is L-aspartate + H(+) = beta-alanine + CO2. It participates in cofactor biosynthesis; (R)-pantothenate biosynthesis; beta-alanine from L-aspartate: step 1/1. Its function is as follows. Catalyzes the pyruvoyl-dependent decarboxylation of aspartate to produce beta-alanine. This Corynebacterium urealyticum (strain ATCC 43042 / DSM 7109) protein is Aspartate 1-decarboxylase.